A 217-amino-acid chain; its full sequence is U exon protein (217 aa).

Disordered regions lie at residues 79 to 113 (ISGE…GGRV) and 171 to 217 (KEAP…WQRR). The segment covering 188-197 (RGQRGRKRRC) has biased composition (basic residues). Polar residues predominate over residues 202-217 (GGFQQPTGANQAWQRR).

It belongs to the adenoviridae U exon protein family.

Its subcellular location is the host nucleus. It localises to the host nucleoplasm. The protein localises to the host nucleolus. Functionally, might play a role in viral replication since it is associated with viral replication centers. Seems to have an effect on DBP localization. The chain is U exon protein from Human adenovirus C serotype 5 (HAdV-5).